The following is a 497-amino-acid chain: Bifunctional protein GlmU (497 aa).

The pyrophosphorylase stretch occupies residues 1–243 (MTSSTTSSTD…SALVAGVNDR (243 aa)). Residues 16-19 (LAAG), lysine 30, glutamine 87, and 92-93 (GT) contribute to the UDP-N-acetyl-alpha-D-glucosamine site. Aspartate 118 is a Mg(2+) binding site. Glycine 153, glutamate 168, asparagine 183, and asparagine 241 together coordinate UDP-N-acetyl-alpha-D-glucosamine. Asparagine 241 is a Mg(2+) binding site. A linker region spans residues 244–264 (VQLAALGAELNRRIVTAHQRA). The interval 265–497 (GVTVIDPGST…LGHHDDSQGS (233 aa)) is N-acetyltransferase. Residues arginine 346 and lysine 364 each contribute to the UDP-N-acetyl-alpha-D-glucosamine site. The active-site Proton acceptor is the histidine 376. 2 residues coordinate UDP-N-acetyl-alpha-D-glucosamine: tyrosine 379 and asparagine 390. Acetyl-CoA contacts are provided by residues alanine 393, 399–400 (NY), serine 418, and alanine 436. Positions 473–497 (ARAAERASGEAAEQALGHHDDSQGS) are disordered. The segment covering 488-497 (LGHHDDSQGS) has biased composition (basic and acidic residues).

The protein in the N-terminal section; belongs to the N-acetylglucosamine-1-phosphate uridyltransferase family. In the C-terminal section; belongs to the transferase hexapeptide repeat family. Homotrimer. Requires Mg(2+) as cofactor.

Its subcellular location is the cytoplasm. It catalyses the reaction alpha-D-glucosamine 1-phosphate + acetyl-CoA = N-acetyl-alpha-D-glucosamine 1-phosphate + CoA + H(+). The catalysed reaction is N-acetyl-alpha-D-glucosamine 1-phosphate + UTP + H(+) = UDP-N-acetyl-alpha-D-glucosamine + diphosphate. The protein operates within nucleotide-sugar biosynthesis; UDP-N-acetyl-alpha-D-glucosamine biosynthesis; N-acetyl-alpha-D-glucosamine 1-phosphate from alpha-D-glucosamine 6-phosphate (route II): step 2/2. It participates in nucleotide-sugar biosynthesis; UDP-N-acetyl-alpha-D-glucosamine biosynthesis; UDP-N-acetyl-alpha-D-glucosamine from N-acetyl-alpha-D-glucosamine 1-phosphate: step 1/1. Its pathway is bacterial outer membrane biogenesis; LPS lipid A biosynthesis. Functionally, catalyzes the last two sequential reactions in the de novo biosynthetic pathway for UDP-N-acetylglucosamine (UDP-GlcNAc). The C-terminal domain catalyzes the transfer of acetyl group from acetyl coenzyme A to glucosamine-1-phosphate (GlcN-1-P) to produce N-acetylglucosamine-1-phosphate (GlcNAc-1-P), which is converted into UDP-GlcNAc by the transfer of uridine 5-monophosphate (from uridine 5-triphosphate), a reaction catalyzed by the N-terminal domain. The polypeptide is Bifunctional protein GlmU (Mycobacterium sp. (strain JLS)).